Reading from the N-terminus, the 348-residue chain is Anthranilate phosphoribosyltransferase (348 aa).

Residues glycine 91, 94-95 (GD), threonine 99, 101-104 (NIST), 119-127 (KHGNRSASG), and serine 131 contribute to the 5-phospho-alpha-D-ribose 1-diphosphate site. Position 91 (glycine 91) interacts with anthranilate. Serine 103 contributes to the Mg(2+) binding site. Asparagine 122 contributes to the anthranilate binding site. Arginine 177 serves as a coordination point for anthranilate. Mg(2+) is bound by residues aspartate 236 and glutamate 237.

The protein belongs to the anthranilate phosphoribosyltransferase family. As to quaternary structure, homodimer. Mg(2+) is required as a cofactor.

The catalysed reaction is N-(5-phospho-beta-D-ribosyl)anthranilate + diphosphate = 5-phospho-alpha-D-ribose 1-diphosphate + anthranilate. It functions in the pathway amino-acid biosynthesis; L-tryptophan biosynthesis; L-tryptophan from chorismate: step 2/5. In terms of biological role, catalyzes the transfer of the phosphoribosyl group of 5-phosphorylribose-1-pyrophosphate (PRPP) to anthranilate to yield N-(5'-phosphoribosyl)-anthranilate (PRA). This Synechococcus elongatus (strain ATCC 33912 / PCC 7942 / FACHB-805) (Anacystis nidulans R2) protein is Anthranilate phosphoribosyltransferase.